Consider the following 239-residue polypeptide: Ribonuclease 3 (239 aa).

The 126-residue stretch at 12-137 (RARLETAIGY…LIAAIYLDGG (126 aa)) folds into the RNase III domain. Glu50 is a binding site for Mg(2+). Asp54 is a catalytic residue. Mg(2+) contacts are provided by Asp123 and Glu126. Residue Glu126 is part of the active site. In terms of domain architecture, DRBM spans 162–231 (DAKTELQEWA…AMRLLEREGV (70 aa)).

Belongs to the ribonuclease III family. As to quaternary structure, homodimer. The cofactor is Mg(2+).

The protein resides in the cytoplasm. The enzyme catalyses Endonucleolytic cleavage to 5'-phosphomonoester.. Functionally, digests double-stranded RNA. Involved in the processing of primary rRNA transcript to yield the immediate precursors to the large and small rRNAs (23S and 16S). Processes some mRNAs, and tRNAs when they are encoded in the rRNA operon. Processes pre-crRNA and tracrRNA of type II CRISPR loci if present in the organism. The chain is Ribonuclease 3 from Sinorhizobium fredii (strain NBRC 101917 / NGR234).